A 338-amino-acid chain; its full sequence is Aspartate carbamoyltransferase catalytic subunit (338 aa).

Positions 59 and 60 each coordinate carbamoyl phosphate. Lys87 lines the L-aspartate pocket. Residues Arg109, His142, and Gln145 each coordinate carbamoyl phosphate. L-aspartate is bound by residues Arg182 and Arg253. 2 residues coordinate carbamoyl phosphate: Gly294 and Pro295.

Belongs to the aspartate/ornithine carbamoyltransferase superfamily. ATCase family. As to quaternary structure, heterododecamer (2C3:3R2) of six catalytic PyrB chains organized as two trimers (C3), and six regulatory PyrI chains organized as three dimers (R2).

It catalyses the reaction carbamoyl phosphate + L-aspartate = N-carbamoyl-L-aspartate + phosphate + H(+). It functions in the pathway pyrimidine metabolism; UMP biosynthesis via de novo pathway; (S)-dihydroorotate from bicarbonate: step 2/3. Catalyzes the condensation of carbamoyl phosphate and aspartate to form carbamoyl aspartate and inorganic phosphate, the committed step in the de novo pyrimidine nucleotide biosynthesis pathway. The sequence is that of Aspartate carbamoyltransferase catalytic subunit from Prochlorococcus marinus (strain AS9601).